Consider the following 308-residue polypeptide: Porphobilinogen deaminase (308 aa).

Cys241 is subject to S-(dipyrrolylmethanemethyl)cysteine.

This sequence belongs to the HMBS family. As to quaternary structure, monomer. The cofactor is dipyrromethane.

The enzyme catalyses 4 porphobilinogen + H2O = hydroxymethylbilane + 4 NH4(+). Its pathway is porphyrin-containing compound metabolism; protoporphyrin-IX biosynthesis; coproporphyrinogen-III from 5-aminolevulinate: step 2/4. Tetrapolymerization of the monopyrrole PBG into the hydroxymethylbilane pre-uroporphyrinogen in several discrete steps. In Staphylococcus epidermidis (strain ATCC 35984 / DSM 28319 / BCRC 17069 / CCUG 31568 / BM 3577 / RP62A), this protein is Porphobilinogen deaminase.